A 232-amino-acid polypeptide reads, in one-letter code: Ribosomal RNA large subunit methyltransferase E (232 aa).

Glycine 64, tryptophan 66, aspartate 97, aspartate 113, and aspartate 138 together coordinate S-adenosyl-L-methionine. Catalysis depends on lysine 178, which acts as the Proton acceptor.

It belongs to the class I-like SAM-binding methyltransferase superfamily. RNA methyltransferase RlmE family.

It is found in the cytoplasm. It catalyses the reaction uridine(2552) in 23S rRNA + S-adenosyl-L-methionine = 2'-O-methyluridine(2552) in 23S rRNA + S-adenosyl-L-homocysteine + H(+). Functionally, specifically methylates the uridine in position 2552 of 23S rRNA at the 2'-O position of the ribose in the fully assembled 50S ribosomal subunit. The chain is Ribosomal RNA large subunit methyltransferase E from Leptothrix cholodnii (strain ATCC 51168 / LMG 8142 / SP-6) (Leptothrix discophora (strain SP-6)).